A 504-amino-acid polypeptide reads, in one-letter code: L-carnitine/gamma-butyrobetaine antiporter (504 aa).

The next 12 helical transmembrane spans lie at 10-30 (IEPKVFFPPLIIVGILCWLTV), 51-71 (WGWAFEWYMVVMLFGWFWLVF), 92-112 (IFMMFASCTSAAVLFWGSIEI), 143-163 (GPLPWATYSFLSVAFAYFFFV), 195-215 (FYLVALIFAMGTSLGLATPLV), 231-251 (LDAIIITCWIILNTICVACGL), 263-283 (SYLSFLMLGWVFIVSGASFIM), 316-336 (WTVFYWAWWVIYAIQMSIFLA), 347-367 (LCFGMVLGLTASTWILWTVLG), 398-418 (WAALPLSTATMWGFFILCFIA), 446-466 (LLVRIGWSVLVGIIGIVLLAL), and 475-495 (AIIAGGCPLFFVNIMVTLSFI).

It belongs to the BCCT transporter (TC 2.A.15) family. CaiT subfamily. As to quaternary structure, homotrimer.

It localises to the cell inner membrane. It catalyses the reaction 4-(trimethylamino)butanoate(in) + (R)-carnitine(out) = 4-(trimethylamino)butanoate(out) + (R)-carnitine(in). It participates in amine and polyamine metabolism; carnitine metabolism. In terms of biological role, catalyzes the exchange of L-carnitine for gamma-butyrobetaine. The sequence is that of L-carnitine/gamma-butyrobetaine antiporter from Escherichia coli O81 (strain ED1a).